The primary structure comprises 282 residues: Elongation factor Ts (282 aa).

The tract at residues 80 to 83 (TDFV) is involved in Mg(2+) ion dislocation from EF-Tu.

This sequence belongs to the EF-Ts family.

It localises to the cytoplasm. Associates with the EF-Tu.GDP complex and induces the exchange of GDP to GTP. It remains bound to the aminoacyl-tRNA.EF-Tu.GTP complex up to the GTP hydrolysis stage on the ribosome. In Chlamydia felis (strain Fe/C-56) (Chlamydophila felis), this protein is Elongation factor Ts.